A 520-amino-acid chain; its full sequence is Ribonuclease Y (520 aa).

Residues 4–24 (TVWILISILLATVGAVVGFFV) form a helical membrane-spanning segment. Residues 86–116 (KQENRLMQKEENLDRKDETLDKREQQLEKKE) form a disordered region. Residues 210–273 (TVSVVNLPND…ETARIALDKL (64 aa)) form the KH domain. Positions 336–429 (VLKHSMEVAY…VAAADALSAA (94 aa)) constitute an HD domain.

Belongs to the RNase Y family.

Its subcellular location is the cell membrane. Functionally, endoribonuclease that initiates mRNA decay. In Bacillus cereus (strain ATCC 10987 / NRS 248), this protein is Ribonuclease Y.